Consider the following 226-residue polypeptide: MNSQGSDRKAVTLLLLVMSNLLFCQNAHPLPICPGGNCQMPLQELFDRVIMLSHYIYMLSADMFIELDKQYAQDHEFIAKAISDCPTSSLATPEGKEEAQQVPPEVLLNLILSLVHSWNDPLFQLVTEVDGIHEASDAIISRAKEIGEQNKRLLEGIEKILGQAYPEAKGNEIYSVWSQFPSLQGVDEESRDLAIYNKVRCLRRDSHKVDNYLKLLRCRVVHNNNC.

Residues 1–29 form the signal peptide; sequence MNSQGSDRKAVTLLLLVMSNLLFCQNAHP. Cys33 and Cys38 are joined by a disulfide. A phosphoserine mark is found at Ser53 and Ser117. 2 disulfides stabilise this stretch: Cys85/Cys201 and Cys218/Cys226.

The protein belongs to the somatotropin/prolactin family. As to quaternary structure, interacts with PRLR.

It is found in the secreted. In terms of biological role, prolactin acts primarily on the mammary gland by promoting lactation. In Mesocricetus auratus (Golden hamster), this protein is Prolactin (PRL).